The primary structure comprises 356 residues: Butyrate kinase 2 (356 aa).

The protein belongs to the acetokinase family. Homodimer.

The protein resides in the cytoplasm. It carries out the reaction butanoate + ATP = butanoyl phosphate + ADP. It functions in the pathway lipid metabolism; butanoate metabolism. Its function is as follows. Catalyzes the conversion of butyryl-CoA through butyryl phosphate to butyrate. This chain is Butyrate kinase 2 (buk2), found in Clostridium acetobutylicum (strain ATCC 824 / DSM 792 / JCM 1419 / IAM 19013 / LMG 5710 / NBRC 13948 / NRRL B-527 / VKM B-1787 / 2291 / W).